The primary structure comprises 992 residues: Ribosome quality control complex subunit NEMF homolog (992 aa).

A compositionally biased stretch (basic and acidic residues) spans 214 to 231 (KETTEETPEAEDKPEKGG). Residues 214 to 245 (KETTEETPEAEDKPEKGGKKQRKKQQNTKLEQ) are disordered. Coiled-coil stretches lie at residues 331–370 (STQE…LTKV) and 481–514 (SAAQ…VRTI). Disordered stretches follow at residues 688–715 (EVEH…NTEI) and 771–895 (GPSR…GDVD). Over residues 702-715 (SNINLSEPSSNTEI) the composition is skewed to polar residues. A coiled-coil region spans residues 774 to 839 (RKKQVSAKKT…QDDEEREIRM (66 aa)). Basic and acidic residues predominate over residues 782-796 (KTKEDKARAKQEAAK). Positions 814–825 (RGQKGKLKKMKQ) are enriched in basic residues. Positions 845 to 874 (SGKEKPQASADKVVEKSESTKEYVKPEKSA) are enriched in basic and acidic residues.

It belongs to the NEMF family. Component of the ribosome quality control complex (RQC), composed of at least the E3 ubiquitin ligase l(3)76BDr/LTN1 and Clbn/NEMF associated with the 60S ribosomal subunit. The complex probably also contains TCF25 as well as TER94/VCP and its ubiquitin-binding cofactors. Interacts (via its C-terminus) with pros (via its homeobox). Interacts (via its N-terminus) with emb. As to expression, expressed in enterocytes (at protein level).

Its subcellular location is the nucleus. The protein resides in the cytoplasm. The protein localises to the mitochondrion outer membrane. In terms of biological role, key component of the ribosome quality control complex (RQC), a ribosome-associated complex that mediates the extraction of incompletely synthesized nascent chains from stalled ribosomes as well as their ubiquitin-mediated proteasomal degradation. Thereby, frees 60S subunit ribosomes from the stalled translation complex and prevents the accumulation of nascent polypeptide chains that are potentially toxic for the cell. Within the RQC complex, Clbn/NEMF specifically binds stalled 60S ribosomal subunits by recognizing an exposed, nascent chain-conjugated tRNA moiety. Following binding to stalled 60S ribosomal subunits, Clbn/NEMF mediates CAT tailing by recruiting alanine-charged tRNA to the A-site and directing the elongation of stalled nascent chains independently of mRNA or 40S subunits, leading to non-templated C-terminal alanine extensions (CAT tails). On mitochondrial surface, plays a role in mitochondrial-stress induced translational termination impairment and protein carboxyl terminal extension (MISTERMINATE). Plays a role in regulating nuclear transport possibly through directly binding to both emb and cargo proteins. Plays a role in the regulation of G1-to-S cell cycle transition. Regulates S phase checkpoint by antagonizing E2F1 activity. Together with hid and tefu/ATM, plays a role in DNA damage-induced apoptosis through both p53-dependent and -independent activity. Plays an essential role in the regulation of mitochondrial structure and redox state in enterocytes which is essential for the control of intestinal stem cells proliferation and intestinal homeostasis. This chain is Ribosome quality control complex subunit NEMF homolog, found in Drosophila melanogaster (Fruit fly).